The primary structure comprises 642 residues: G protein-coupled receptor kinase 1 (642 aa).

The tract at residues 1 to 202 is N-terminal; it reads MEIENIVANT…LEKRPVDKHT (202 aa). The RGS domain occupies 52–188; the sequence is YAFVVEKQPI…AESMYFHRFL (137 aa). The Protein kinase domain maps to 203–470; the sequence is FRLYRVLGKG…AEEIRAHPFF (268 aa). ATP is bound by residues 209–217 and lysine 232; that span reads LGKGGFGEV. Residue aspartate 328 is the Proton acceptor of the active site. One can recognise an AGC-kinase C-terminal domain in the interval 480-545; it reads EPVPWKKMEA…GCVSIPWQSE (66 aa). The disordered stretch occupies residues 612–642; the sequence is VEQQQPPKTSTQTPAVRSSRAASASGRTLVI. The segment covering 614 to 636 has biased composition (low complexity); that stretch reads QQQPPKTSTQTPAVRSSRAASAS.

This sequence belongs to the protein kinase superfamily. AGC Ser/Thr protein kinase family. GPRK subfamily.

It carries out the reaction [G-protein-coupled receptor] + ATP = [G-protein-coupled receptor]-phosphate + ADP + H(+). Specifically phosphorylates the activated forms of G protein-coupled receptors. This chain is G protein-coupled receptor kinase 1 (grk-1), found in Caenorhabditis elegans.